Reading from the N-terminus, the 610-residue chain is Elongation factor 4 (610 aa).

A tr-type G domain is found at 15 to 197; the sequence is KSIRNFSIIA…RIINDIPYPK (183 aa). Residues 27-32 and 144-147 each bind GTP; these read DHGKST and NKID.

This sequence belongs to the TRAFAC class translation factor GTPase superfamily. Classic translation factor GTPase family. LepA subfamily.

The protein resides in the cell membrane. It carries out the reaction GTP + H2O = GDP + phosphate + H(+). Required for accurate and efficient protein synthesis under certain stress conditions. May act as a fidelity factor of the translation reaction, by catalyzing a one-codon backward translocation of tRNAs on improperly translocated ribosomes. Back-translocation proceeds from a post-translocation (POST) complex to a pre-translocation (PRE) complex, thus giving elongation factor G a second chance to translocate the tRNAs correctly. Binds to ribosomes in a GTP-dependent manner. This Buchnera aphidicola subsp. Acyrthosiphon pisum (strain 5A) protein is Elongation factor 4.